Here is an 83-residue protein sequence, read N- to C-terminus: Large ribosomal subunit protein bL27 (83 aa).

Belongs to the bacterial ribosomal protein bL27 family.

This chain is Large ribosomal subunit protein bL27 (rpmA), found in Thermotoga maritima (strain ATCC 43589 / DSM 3109 / JCM 10099 / NBRC 100826 / MSB8).